Here is an 88-residue protein sequence, read N- to C-terminus: U18-hexatoxin-Hi1a (88 aa).

The signal sequence occupies residues 1 to 17 (MRIYSLLILSFLLLASA). The propeptide occupies 18–47 (VLINSAEMPRSEKSLLYSIMQGREDSEEGR). 4 disulfides stabilise this stretch: Cys-48–Cys-63, Cys-55–Cys-69, Cys-62–Cys-81, and Cys-71–Cys-79.

It belongs to the neurotoxin 07 (Beta/delta-agtx) family. 02 (aga-3) subfamily. Expressed by the venom gland.

Its subcellular location is the secreted. Its function is as follows. Weak insecticidal toxin with probable ion channel impairing activity. In vivo, induces paralysis when injected into sheep blowflies (L.cuprina). Shows weak toxicity, since it is only toxic at high doses, and flies recover within 24 hours. In Hadronyche infensa (Fraser island funnel-web spider), this protein is U18-hexatoxin-Hi1a.